The sequence spans 43 residues: Disintegrin CV (43 aa).

4 disulfides stabilise this stretch: C1–C10, C6–C29, C7–C34, and C19–C36. A Disintegrin domain is found at C1–G43. Positions R21–S23 match the Cell attachment site; atypical (RTS) motif.

It belongs to the disintegrin family. Short disintegrin subfamily. Monomer. In terms of tissue distribution, expressed by the venom gland.

The protein localises to the secreted. Specifically interacts with the alpha-1/beta-1 integrin (ITGA1/ITGB1). Exhibits highly inhibitory effects on cell adhesion and cell migration to collagens I and IV. Also shows in vivo anti-angiogenic activity. This Cerastes vipera (Sahara sand viper) protein is Disintegrin CV.